Reading from the N-terminus, the 153-residue chain is Lipoprotein signal peptidase (153 aa).

3 consecutive transmembrane segments (helical) span residues 7–27, 59–79, and 93–113; these read LIIISIFLIDFFTKKWILNNY, NLIRILIIVISIFILLFIFYM, and SIIIGGSFGNIFDRIFYGSVI. Catalysis depends on residues Asp114 and Asp132. Residues 123–143 form a helical membrane-spanning segment; it reads WHFPVFNFADISIFIGFLILI.

Belongs to the peptidase A8 family.

The protein resides in the cell membrane. It catalyses the reaction Release of signal peptides from bacterial membrane prolipoproteins. Hydrolyzes -Xaa-Yaa-Zaa-|-(S,diacylglyceryl)Cys-, in which Xaa is hydrophobic (preferably Leu), and Yaa (Ala or Ser) and Zaa (Gly or Ala) have small, neutral side chains.. It functions in the pathway protein modification; lipoprotein biosynthesis (signal peptide cleavage). In terms of biological role, this protein specifically catalyzes the removal of signal peptides from prolipoproteins. This chain is Lipoprotein signal peptidase, found in Wigglesworthia glossinidia brevipalpis.